A 376-amino-acid polypeptide reads, in one-letter code: Thiol-disulfide oxidoreductase LTO1 (376 aa).

Residues 1 to 45 (MMARFVSVSSCQFHFGFREVSPPSVTSYPRRFEVSDRRFPAIPIK) constitute a chloroplast transit peptide. The tract at residues 44–77 (IKCSSSEPENGEDSAPSLSSSSSSSTSEVSTSNS) is disordered. Over 46–81 (CSSSEPENGEDSAPSLSSSSSSSTSEVSTSNSSTYN) the chain is Stromal. The segment covering 57–77 (SAPSLSSSSSSSTSEVSTSNS) has biased composition (low complexity). A helical membrane pass occupies residues 82–102 (WYTGIGGIGMLDTAYLTYLKV). Residues 103 to 125 (TGSDAFCPIGGGTCGDVLNSDYA) lie on the Lumenal side of the membrane. A disulfide bridge connects residues cysteine 109 and cysteine 116. Residues 126–146 (VVFGVPLPVIGFVMYGVVTAL) traverse the membrane as a helical segment. Topologically, residues 147 to 165 (SAELGEGNLPFGISKSNGR) are stromal. The chain crosses the membrane as a helical span at residues 166-186 (FALFGITTAMASASAYFLYIL). Residues 187–192 (STKLSG) lie on the Lumenal side of the membrane. Residues 193-213 (SSCLYCLVSAFLSFSLFFLSV) form a helical membrane-spanning segment. Cysteine 195 and cysteine 198 form a disulfide bridge. Residues 214 to 223 (KDVKLQEIQQ) are Stromal-facing. Residues 224-244 (VVGLQICLAIIVVASLTASYS) traverse the membrane as a helical segment. At 245–376 (TAQPIPSRSG…DQANETNQLQ (132 aa)) the chain is on the lumenal side. 2 disulfide bridges follow: cysteine 293/cysteine 296 and cysteine 316/cysteine 331.

This sequence belongs to the VKOR family. In terms of assembly, interacts with the PSII subunits PSBO1 and PSBO2. Interacts with TL17, TL20.3, HCF164, PETJ, VDE1, EDA3, FKBP13 and FKBP20-2. In terms of tissue distribution, expressed in cotyledons, rosette leaves, stems, cauline leaves and flowers.

It localises to the plastid. The protein localises to the chloroplast thylakoid membrane. Its function is as follows. Thiol-disulfide oxidoreductase catalyzing disulfide bond formation of chloroplast proteins and involved in redox regulation and photosynthetic electron transport. Required for the assembly of photosystem II (PSII) through the formation of disulfide bond in PSBO, a subunit of the PSII oxygen-evolving complex in the thylakoid lumen. Involved in the formation of disulfide bonds in the lumenal protein FKBP13. In vitro, reduces phylloquinone (vitamin K1) and menaquinone (vitamin K2) to their respective quinol. Cannot reduce phylloquinone epoxide to phylloquinone. Plays an important role in regulating the thylakoid lumen redox. This chain is Thiol-disulfide oxidoreductase LTO1, found in Arabidopsis thaliana (Mouse-ear cress).